A 138-amino-acid chain; its full sequence is Ergosterol biosynthetic protein 28 (138 aa).

The chain crosses the membrane as a helical span at residues 17 to 33 (LPYWLLFISVVSIFNSV). N-linked (GlcNAc...) asparagine glycosylation occurs at N40. 3 helical membrane passes run 56 to 75 (LSARTFGTWTLITSIVRFYG), 87 to 107 (LTQFTFAIAAWHFLSEWLYFG), and 114 to 131 (GLSGPLIVSSVSLVWMYL).

Belongs to the ERG28 family. Heterotetramer of ERG25, ERG26, ERG27 and ERG28. ERG28 acts as a scaffold to tether ERG27 and other 4,4-demethylation-related enzymes, forming a demethylation enzyme complex, in the endoplasmic reticulum. Interacts with ERG25, ERG26 and ERG27. Also interacts with ERG1, ERG3, ERG5, ERG6 and ERG11.

It localises to the endoplasmic reticulum membrane. In terms of biological role, part of the third module of ergosterol biosynthesis pathway that includes the late steps of the pathway. ERG28 has a role as a scaffold to help anchor the catalytic components of the C-4 demethylation complex ERG25, ERG26 and ERG27 to the endoplasmic reticulum. The third module or late pathway involves the ergosterol synthesis itself through consecutive reactions that mainly occur in the endoplasmic reticulum (ER) membrane. Firstly, the squalene synthase ERG9 catalyzes the condensation of 2 farnesyl pyrophosphate moieties to form squalene, which is the precursor of all steroids. Squalene synthase is crucial for balancing the incorporation of farnesyl diphosphate (FPP) into sterol and nonsterol isoprene synthesis. Secondly, the squalene epoxidase ERG1 catalyzes the stereospecific oxidation of squalene to (S)-2,3-epoxysqualene, which is considered to be a rate-limiting enzyme in steroid biosynthesis. Then, the lanosterol synthase ERG7 catalyzes the cyclization of (S)-2,3 oxidosqualene to lanosterol, a reaction that forms the sterol core. In the next steps, lanosterol is transformed to zymosterol through a complex process involving various demethylation, reduction and desaturation reactions. The lanosterol 14-alpha-demethylase ERG11 (also known as CYP51) catalyzes C14-demethylation of lanosterol to produce 4,4'-dimethyl cholesta-8,14,24-triene-3-beta-ol, which is critical for ergosterol biosynthesis. The C-14 reductase ERG24 reduces the C14=C15 double bond of 4,4-dimethyl-cholesta-8,14,24-trienol to produce 4,4-dimethyl-cholesta-8,24-dienol. 4,4-dimethyl-cholesta-8,24-dienol is substrate of the C-4 demethylation complex ERG25-ERG26-ERG27 in which ERG25 catalyzes the three-step monooxygenation required for the demethylation of 4,4-dimethyl and 4alpha-methylsterols, ERG26 catalyzes the oxidative decarboxylation that results in a reduction of the 3-beta-hydroxy group at the C-3 carbon to an oxo group, and ERG27 is responsible for the reduction of the keto group on the C-3. ERG28 has a role as a scaffold to help anchor ERG25, ERG26 and ERG27 to the endoplasmic reticulum and ERG29 regulates the activity of the iron-containing C4-methylsterol oxidase ERG25. Then, the sterol 24-C-methyltransferase ERG6 catalyzes the methyl transfer from S-adenosyl-methionine to the C-24 of zymosterol to form fecosterol. The C-8 sterol isomerase ERG2 catalyzes the reaction which results in unsaturation at C-7 in the B ring of sterols and thus converts fecosterol to episterol. The sterol-C5-desaturase ERG3 then catalyzes the introduction of a C-5 double bond in the B ring to produce 5-dehydroepisterol. The C-22 sterol desaturase ERG5 further converts 5-dehydroepisterol into ergosta-5,7,22,24(28)-tetraen-3beta-ol by forming the C-22(23) double bond in the sterol side chain. Finally, ergosta-5,7,22,24(28)-tetraen-3beta-ol is substrate of the C-24(28) sterol reductase ERG4 to produce ergosterol. This chain is Ergosterol biosynthetic protein 28, found in Candida albicans (strain SC5314 / ATCC MYA-2876) (Yeast).